The chain runs to 549 residues: Cation/acetate symporter ActP (549 aa).

A run of 13 helical transmembrane segments spans residues 33-53, 77-97, 103-123, 148-168, 183-203, 206-226, 262-282, 303-323, 355-375, 404-424, 428-448, 464-484, and 493-513; these read WQAIIMFLIFVVFTLGITYWA, LAIAGDYMSAASFLGISALVF, GLIYSLGFLVGWPIILFLIAE, ILSACGSLVVVALYLIAQMVG, IAVVLVGVLMMMYVLFGGMLA, WVQIIKAVLLLFGASFMAFMV, ISALSLGLGLMFGTAGLPHIL, GFMGYFYILTFIIGFGAIMLV, LFLGFISAVAFATILAVVAGL, VSKITVLILGVIAIILGVLFE, IAFMVGLAFAIAASCNFPIIL, GGWLGLITAVVLMILGPTIWV, and IFPYEYPALFSISVAFLGIWF.

Belongs to the sodium:solute symporter (SSF) (TC 2.A.21) family.

It localises to the cell inner membrane. In terms of biological role, transports acetate. This Escherichia coli O6:K15:H31 (strain 536 / UPEC) protein is Cation/acetate symporter ActP.